Consider the following 354-residue polypeptide: MSRVLSEVLAAVRPVDQSLFPVAKAHLDNLTKPRGSLGRLEELAARLFVIGGGAKPVVDPARIYVCAGDHGVAAEGVSLFPQEVTRQMVANFLAGGAGINVLAATAGIDLRVVDAGCLGDPFAPHPRFAGARVASGTANLAEAPAMTREQCESALLLGVSLAEAAAAEGVRALGTGDMGIANTTPSTALFCAYLGLSPAEITGPGTGLDAGGVGRKAAIVAKGLALHADVVAGGDPVAVLACLGGLEIACLAGLVIGAAACRLPIAVDGFISTAAYVAARAICPTVADYAVVSHASAEPGYAPIMAALGQKPLLDLGLRLGEGTGAALALFLMRSACNIYNDMATFASAGVSEG.

E322 (proton acceptor) is an active-site residue.

This sequence belongs to the CobT family.

The catalysed reaction is 5,6-dimethylbenzimidazole + nicotinate beta-D-ribonucleotide = alpha-ribazole 5'-phosphate + nicotinate + H(+). It participates in nucleoside biosynthesis; alpha-ribazole biosynthesis; alpha-ribazole from 5,6-dimethylbenzimidazole: step 1/2. Functionally, catalyzes the synthesis of alpha-ribazole-5'-phosphate from nicotinate mononucleotide (NAMN) and 5,6-dimethylbenzimidazole (DMB). This is Nicotinate-nucleotide--dimethylbenzimidazole phosphoribosyltransferase from Solidesulfovibrio magneticus (strain ATCC 700980 / DSM 13731 / RS-1) (Desulfovibrio magneticus).